A 780-amino-acid polypeptide reads, in one-letter code: MRINILRVEYHSKTAHSILLQLDLFKKVKVICHMSQSIKFRVTEARQRDVGKKVARISETSMRKLNVEAGDYIEIIGQDGNSALAQVMPAYDISDDEIRIDGYIRKSIKVGIGDDVTVRKTNVSPASKVVLAPTQPIRFDNSFVEYVKDTLMDKPLAKGETLPIPIYTGTLELTVVNTQPSNYVYVTGSTNIEIREEPVKESSLAYPKVSWEDIGDLEEAKQKIREIVEWPMRHPELFQRLGIDPPKGILLYGPPGTGKTLLARALANEIGAYFITVNGPEIMSKFYGESEQRIREIFKEAEENAPSIIFIDEIDAIAPKREDVTGEVEKRVVAQLLTLMDGIKGRGRVIVIGATNRPDAIDPALRRPGRFDREIEIRPPDTKGRKDILQVHTRNMPITDDVDLDKLAEMTYGYTGADLAALAKEAAIYALRRFVDEKKLNLDQPTIPAEIIKELKVSMNDFLNALKSIQPSLLREVYVEVPKVNWNDIGGLDNVKQQLREAVEWPLRFPELFTKSGVTPPKGILLFGPPGTGKTMLAKAVATESGANFIAVRGPEILSKWVGESEKAIREIFRKARQAAPTVIFFDEIDSIAPIRGLSTDSGVTERIVNQLLAEMDGIVPLNKVVIIAATNRPDILDPALLRPGRFDRLIYVPPPDKTARFEILKVHTKNVPLAEDVSLEDIAEKAEGYTGADLEALVREATINAMRSIYSMCDKQSRDECKGNMECYQKHIKECMNKTSFKVSKEDFEKALNVVKASLTQADIQRYERFSKELKRAIA.

Residues glycine 253 to threonine 260 and glycine 528 to threonine 535 contribute to the ATP site.

This sequence belongs to the AAA ATPase family. CDC48 subfamily.

Its function is as follows. Not yet known, shows ATPase activity. This chain is Protein SAV (sav), found in Sulfolobus acidocaldarius (strain ATCC 33909 / DSM 639 / JCM 8929 / NBRC 15157 / NCIMB 11770).